The primary structure comprises 290 residues: Eukaryotic translation initiation factor 3 subunit G (290 aa).

Over residues 1–12 the composition is skewed to basic and acidic residues; the sequence is MADSKQSNRDWA. Disordered stretches follow at residues 1–30 and 173–192; these read MADSKQSNRDWAADDVDADELPPTTESTDA and AGETGGKYVPPSQRAGATGA. An RRM domain is found at 204-285; the sequence is PTLRVTSLSI…LILEVAWSQP (82 aa).

This sequence belongs to the eIF-3 subunit G family. In terms of assembly, component of the eukaryotic translation initiation factor 3 (eIF-3) complex.

Its subcellular location is the cytoplasm. RNA-binding component of the eukaryotic translation initiation factor 3 (eIF-3) complex, which is involved in protein synthesis of a specialized repertoire of mRNAs and, together with other initiation factors, stimulates binding of mRNA and methionyl-tRNAi to the 40S ribosome. The eIF-3 complex specifically targets and initiates translation of a subset of mRNAs involved in cell proliferation. This subunit can bind 18S rRNA. This is Eukaryotic translation initiation factor 3 subunit G from Cryptococcus neoformans var. neoformans serotype D (strain B-3501A) (Filobasidiella neoformans).